A 227-amino-acid chain; its full sequence is uncharacterized protein (227 aa).

The N-terminal stretch at 1-25 (MLIMKKLLLIAATSATMLSSSVSFA) is a signal peptide.

This sequence to R.conorii RC1281.

This is an uncharacterized protein from Rickettsia conorii (strain ATCC VR-613 / Malish 7).